We begin with the raw amino-acid sequence, 101 residues long: Feather keratin Cos2-2 (101 aa).

Ser-2 carries the post-translational modification N-acetylserine.

This sequence belongs to the avian keratin family. As to quaternary structure, the avian keratins (F-ker, S-ker, C-ker and B-ker) are a complex mixture of very similar polypeptides.

The polypeptide is Feather keratin Cos2-2 (Columba livia (Rock dove)).